Here is a 20-residue protein sequence, read N- to C-terminus: Thylakoid lumenal 22 kDa protein (20 aa).

The protein resides in the plastid. Its subcellular location is the chloroplast thylakoid lumen. This chain is Thylakoid lumenal 22 kDa protein, found in Spinacia oleracea (Spinach).